The chain runs to 372 residues: Alanine dehydrogenase 2 (372 aa).

His95 is a catalytic residue. 169–199 lines the NAD(+) pocket; it reads KVTIIGGGQAGTNAAKIALGLGADVTILDVN.

The protein belongs to the AlaDH/PNT family.

It catalyses the reaction L-alanine + NAD(+) + H2O = pyruvate + NH4(+) + NADH + H(+). It participates in amino-acid degradation; L-alanine degradation via dehydrogenase pathway; NH(3) and pyruvate from L-alanine: step 1/1. In terms of biological role, may play a role in cell wall synthesis as L-alanine is an important constituent of the peptidoglycan layer. This Staphylococcus aureus (strain N315) protein is Alanine dehydrogenase 2 (ald2).